The sequence spans 210 residues: Regulator of G-protein signaling 17 (210 aa).

The disordered stretch occupies residues 1 to 21 (MRKRQQSQNEGTPAVSQAPGN). One can recognise an RGS domain in the interval 84 to 200 (NFDKMMKAPA…LNSQIYKSFV (117 aa)). Y137 carries the phosphotyrosine modification.

As to quaternary structure, interacts with GNAI1 and GNAQ. Interacts with GNAZ and GNAI2. Interacts with OPRM1. Forms a complex with mu-opioid receptors and G(alpha)z/i2 subunits, including GNAZ and GNAI2; the formation of this complex results in mu-opioid receptor desensitization. Interacts with HINT1. Post-translationally, N- and O-glycosylated in synapsomal membranes. In terms of processing, serine phosphorylated in synapsomal membranes. Sumoylated with SUMO1 and SUM02 in synaptosomes. The sumoylated forms act as a scaffold for sequestering mu-opioid receptor-activated G(alpha) subunits. Desumoylated by HINT1. In terms of tissue distribution, predominantly expressed in the cerebellum. Also expressed in the cortex and medulla. Weakly expressed in a number of peripheral tissues notably spleen, lung and leukocytes.

The protein localises to the membrane. The protein resides in the synapse. It is found in the synaptosome. Its subcellular location is the nucleus. It localises to the cytoplasm. In terms of biological role, regulates G protein-coupled receptor signaling cascades, including signaling via muscarinic acetylcholine receptor CHRM2 and dopamine receptor DRD2. Inhibits signal transduction by increasing the GTPase activity of G protein alpha subunits, thereby driving them into their inactive GDP-bound form. Binds selectively to GNAZ and GNAI2 subunits, accelerates their GTPase activity and regulates their signaling activities. Negatively regulates mu-opioid receptor-mediated activation of the G-proteins. The sequence is that of Regulator of G-protein signaling 17 (RGS17) from Homo sapiens (Human).